The primary structure comprises 379 residues: MEYGEEPSIKRFLMLPDDLVFNCLARVSRLHYPTLSLVSKKFRFLLASKELYQTRILLGGTESCLYVCVRLHTDSEQLHWFIIYQGPNSSKKVLVPISSPNFTSAALPGFVVVGHEIYAIGGGSENKNASINATGSKTYNALSSVMVMDSRSHTWREAPSMRVARVFPSACTLDGRIYVTGGCENLNSMNWMEIFDTKTQTWEFLQIPSEEVCKGSEYLSISYQRTVYVGSREKDVTYKMHKGKWRGADICLNHGWSLDPSSCCVIENVFYRCSLGDVRWYDLKKREWAALKGLEGLPTFTNYYRNFKSADHCGKLAISWEEYVLVDDETKIWCAEIAIQKRQNGEIWGTLEWFDNVFISSGPNRHVDLLVNALTATVW.

Residues 9 to 55 (IKRFLMLPDDLVFNCLARVSRLHYPTLSLVSKKFRFLLASKELYQTR) form the F-box domain. 3 Kelch repeats span residues 116-175 (EIYA…TLDG), 176-222 (RIYV…LSIS), and 262-308 (SCCV…RNFK).

The sequence is that of F-box/kelch-repeat protein At4g33900 from Arabidopsis thaliana (Mouse-ear cress).